A 167-amino-acid chain; its full sequence is Thiol peroxidase (167 aa).

The Thioredoxin domain occupies 18–167 (VKVGDQAPDF…PIEAAKALVK (150 aa)). Cys60 (cysteine sulfenic acid (-SOH) intermediate) is an active-site residue. Cys60 and Cys94 are disulfide-bonded.

This sequence belongs to the peroxiredoxin family. Tpx subfamily. As to quaternary structure, homodimer.

The catalysed reaction is a hydroperoxide + [thioredoxin]-dithiol = an alcohol + [thioredoxin]-disulfide + H2O. In terms of biological role, thiol-specific peroxidase that catalyzes the reduction of hydrogen peroxide and organic hydroperoxides to water and alcohols, respectively. Plays a role in cell protection against oxidative stress by detoxifying peroxides. In Bacillus subtilis (strain 168), this protein is Thiol peroxidase.